A 383-amino-acid chain; its full sequence is MTQRKDAPLVALIAGEASGDILGAGLMQALENRYPGARFIGVGGEEMAQAGLTSLFPMEKLSVMGITEVLSHLPELLRLRKSLVRFLLEQRPDVVVGIDSPDFTLPIARRLHDRGLKTVHYVSPSVWAWRQGRIKGIKKSIDLMLTLLPFEARFYEEHDVPVAFVGHPLADRIPLETDVAGARKALALDRDARILAVLPGSRGGEVGQLMPAFLDAMVALNHQDPTLQYVIPAANAARREQIQTLLNTQPNLPVSLIDGQSRTVMAAADVVLMASGTATLEGLLLNKPMVVGYRVGAVTYAIVSRLIKSEFFSLPNLLCRQEMVPELLQSQLTTEAIVAAVRRWFDQPEQAQALKIQFQSVHQQLRGGASEKAAAAVARLLEA.

This sequence belongs to the LpxB family.

It carries out the reaction a lipid X + a UDP-2-N,3-O-bis[(3R)-3-hydroxyacyl]-alpha-D-glucosamine = a lipid A disaccharide + UDP + H(+). It participates in bacterial outer membrane biogenesis; LPS lipid A biosynthesis. Condensation of UDP-2,3-diacylglucosamine and 2,3-diacylglucosamine-1-phosphate to form lipid A disaccharide, a precursor of lipid A, a phosphorylated glycolipid that anchors the lipopolysaccharide to the outer membrane of the cell. The protein is Lipid-A-disaccharide synthase of Alcanivorax borkumensis (strain ATCC 700651 / DSM 11573 / NCIMB 13689 / SK2).